Reading from the N-terminus, the 90-residue chain is Small ribosomal subunit protein uS15c (90 aa).

The protein belongs to the universal ribosomal protein uS15 family. Part of the 30S ribosomal subunit.

Its subcellular location is the plastid. It localises to the chloroplast. This Mesostigma viride (Green alga) protein is Small ribosomal subunit protein uS15c (rps15).